Here is a 1077-residue protein sequence, read N- to C-terminus: Mitogen-activated protein kinase kinase kinase 9 (1077 aa).

The interval 1 to 40 (MESSRSLLGCLASATAAPPGDDATGAGAEEEEDEEEAAAE) is disordered. The segment covering 14-27 (ATAAPPGDDATGAG) has biased composition (low complexity). Positions 28-38 (AEEEEDEEEAA) are enriched in acidic residues. An SH3 domain is found at 45–109 (AALPYWTAVF…PSNYVTPRSA (65 aa)). The Protein kinase domain occupies 137–405 (LTLEEIIGIG…LTTIEESGFF (269 aa)). ATP is bound by residues 143–151 (IGIGGFGKV) and Lys-164. Asp-261 (proton acceptor) is an active-site residue. Thr-297 and Thr-298 each carry phosphothreonine; by autocatalysis. The residue at position 301 (Ser-301) is a Phosphoserine; by autocatalysis. Thr-305 is subject to Phosphothreonine; by autocatalysis. 2 leucine-zipper regions span residues 423–444 (IQEM…EEEL) and 458–479 (LRRR…ELNI). Basic residues predominate over residues 491-503 (VKKRKGKFRKSRL). Disordered stretches follow at residues 491–511 (VKKR…GNRI), 526–606 (SPTM…TSGD), 646–713 (EDED…KRGG), 748–790 (LPPE…KKEE), 860–971 (RDPN…PRPS), and 986–1011 (SHAR…CFAS). At Ser-526 the chain carries Phosphoserine. 2 stretches are compositionally biased toward polar residues: residues 559–568 (PGESSKTWGR) and 693–709 (PVNS…TNSL). Basic and acidic residues predominate over residues 755 to 767 (PPAREEKKRREGL). Residues 863–880 (NQSLTPTHVTLTAPTQPS) show a composition bias toward polar residues. Positions 901–915 (GSRSPSSNGMSPSPG) are enriched in low complexity. Residues 987–1011 (HARSASPANSSSTETPSNLDSCFAS) are compositionally biased toward polar residues.

Belongs to the protein kinase superfamily. STE Ser/Thr protein kinase family. MAP kinase kinase kinase subfamily. As to quaternary structure, homodimer. Requires Mg(2+) as cofactor. Autophosphorylation on serine and threonine residues within the activation loop plays a role in enzyme activation. Thr-305 is likely to be the main autophosphorylation site. Autophosphorylation also occurs on Thr-297 and Ser-301. In terms of tissue distribution, expressed in cochlea and utricle.

The catalysed reaction is L-seryl-[protein] + ATP = O-phospho-L-seryl-[protein] + ADP + H(+). It catalyses the reaction L-threonyl-[protein] + ATP = O-phospho-L-threonyl-[protein] + ADP + H(+). Its activity is regulated as follows. Homodimerization via the leucine zipper domains is required for autophosphorylation of multiple sites in the activation loop and subsequent activation. Autophosphorylation at Thr-305 is the key step in activation of MAP3K9/MLK1 and is required for full phosphorylation. Autophosphorylation at Thr-297 and Ser-301 have been shown to be of secondary importance in the activation of MAP3K9/MLK1. Serine/threonine kinase which acts as an essential component of the MAP kinase signal transduction pathway. Plays an important role in the cascades of cellular responses evoked by changes in the environment. Once activated, acts as an upstream activator of the MKK/JNK signal transduction cascade through the phosphorylation of MAP2K4/MKK4 and MAP2K7/MKK7 which in turn activate the JNKs. The MKK/JNK signaling pathway regulates stress response via activator protein-1 (JUN) and GATA4 transcription factors. Also plays a role in mitochondrial death signaling pathway, including the release cytochrome c, leading to apoptosis. The chain is Mitogen-activated protein kinase kinase kinase 9 (Map3k9) from Mus musculus (Mouse).